Consider the following 150-residue polypeptide: Histone H2B.2 (150 aa).

Composition is skewed to basic and acidic residues over residues 1-21 (MAPKAEKKPAEKKPAEEKAGE) and 33-49 (EKRLPASKGEKGGEGKK). The tract at residues 1-58 (MAPKAEKKPAEKKPAEEKAGEKAPAAGKKPKAEKRLPASKGEKGGEGKKERGRKKAKK) is disordered. An N6-acetyllysine mark is found at lysine 7 and lysine 34. Lysine 146 is covalently cross-linked (Glycyl lysine isopeptide (Lys-Gly) (interchain with G-Cter in ubiquitin)).

It belongs to the histone H2B family. The nucleosome is a histone octamer containing two molecules each of H2A, H2B, H3 and H4 assembled in one H3-H4 heterotetramer and two H2A-H2B heterodimers. The octamer wraps approximately 147 bp of DNA. Post-translationally, can be acetylated to form H2BK6ac and H2BK33ac. In terms of processing, monoubiquitinated by BRE1 to form H2BK143ub1 and deubiquitinated by UBP26. Required for heterochromatic histone H3 di- and trimethylation at H3K4me. May give a specific tag for epigenetic transcriptional activation.

The protein localises to the nucleus. The protein resides in the chromosome. Its function is as follows. Core component of nucleosome. Nucleosomes wrap and compact DNA into chromatin, limiting DNA accessibility to the cellular machineries which require DNA as a template. Histones thereby play a central role in transcription regulation, DNA repair, DNA replication and chromosomal stability. DNA accessibility is regulated via a complex set of post-translational modifications of histones, also called histone code, and nucleosome remodeling. The polypeptide is Histone H2B.2 (H2B.2) (Oryza sativa subsp. indica (Rice)).